An 85-amino-acid chain; its full sequence is Sec-independent protein translocase protein TatA (85 aa).

Residues 1–21 (MAGLQGWQLVIIILLAILLFA) traverse the membrane as a helical segment. A disordered region spans residues 43 to 85 (VKQMRTEGKDAKDERSGTGSTAADEPVEGRVVDRDETDPRDQR). Composition is skewed to basic and acidic residues over residues 44–58 (KQMR…DERS) and 69–85 (VEGR…RDQR).

This sequence belongs to the TatA/E family. In terms of assembly, the Tat system comprises two distinct complexes: a TatABC complex, containing multiple copies of TatA, TatB and TatC subunits, and a separate TatA complex, containing only TatA subunits. Substrates initially bind to the TatABC complex, which probably triggers association of the separate TatA complex to form the active translocon.

The protein resides in the cell membrane. Functionally, part of the twin-arginine translocation (Tat) system that transports large folded proteins containing a characteristic twin-arginine motif in their signal peptide across membranes. TatA could form the protein-conducting channel of the Tat system. This Micrococcus luteus (strain ATCC 4698 / DSM 20030 / JCM 1464 / CCM 169 / CCUG 5858 / IAM 1056 / NBRC 3333 / NCIMB 9278 / NCTC 2665 / VKM Ac-2230) (Micrococcus lysodeikticus) protein is Sec-independent protein translocase protein TatA.